Here is a 473-residue protein sequence, read N- to C-terminus: 3-isopropylmalate dehydratase large subunit (473 aa).

[4Fe-4S] cluster-binding residues include Cys351, Cys414, and Cys417.

It belongs to the aconitase/IPM isomerase family. LeuC type 1 subfamily. Heterodimer of LeuC and LeuD. It depends on [4Fe-4S] cluster as a cofactor.

The catalysed reaction is (2R,3S)-3-isopropylmalate = (2S)-2-isopropylmalate. The protein operates within amino-acid biosynthesis; L-leucine biosynthesis; L-leucine from 3-methyl-2-oxobutanoate: step 2/4. In terms of biological role, catalyzes the isomerization between 2-isopropylmalate and 3-isopropylmalate, via the formation of 2-isopropylmaleate. This Paracidovorax citrulli (strain AAC00-1) (Acidovorax citrulli) protein is 3-isopropylmalate dehydratase large subunit.